A 640-amino-acid polypeptide reads, in one-letter code: Probable serine/threonine-protein kinase samkA (640 aa).

Positions 21-84 (WNNEKIIKWL…SEFEILKNNY (64 aa)) constitute an SAM domain. Residues 73–100 (FKSEFEILKNNYDNNNNNNNNNNNNNNN) are a coiled coil. A disordered region spans residues 84–165 (YDNNNNNNNN…INFNSNSNIT (82 aa)). In terms of domain architecture, Protein kinase spans 191–437 (YEYVESISLG…SKDLQKLSWF (247 aa)). Residues 197-205 (ISLGVFSVV) and K221 contribute to the ATP site. D312 (proton acceptor) is an active-site residue. The segment at 448–482 (QELTKSTTNTTTTTTTTTTPPPPPSPSSSSPSMNE) is disordered. Residues 453-465 (STTNTTTTTTTTT) show a composition bias toward low complexity.

Belongs to the protein kinase superfamily. Ser/Thr protein kinase family.

It carries out the reaction L-seryl-[protein] + ATP = O-phospho-L-seryl-[protein] + ADP + H(+). It catalyses the reaction L-threonyl-[protein] + ATP = O-phospho-L-threonyl-[protein] + ADP + H(+). In Dictyostelium discoideum (Social amoeba), this protein is Probable serine/threonine-protein kinase samkA (samkA).